The sequence spans 608 residues: N(6)-adenosine-methyltransferase MT-A70-like protein (608 aa).

Residues 250–265 (KKKQERRDEKELRPDV) show a composition bias toward basic and acidic residues. Positions 250 to 272 (KKKQERRDEKELRPDVDAGENVT) are disordered. S-adenosyl-L-methionine is bound by residues 395–396 (DL) and aspartate 413. The gate loop 1 stretch occupies residues 414-428 (PPWDIHMELPYGTMS). The tract at residues 480-497 (QLQRIIRTGRTGHWLNHG) is interphase loop. The tract at residues 483–496 (RIIRTGRTGHWLNH) is positively charged region required for RNA-binding. Residues 525–533 (VRATSHKPD) form a gate loop 2 region. Residues lysine 531, 554-557 (RPHN), and 567-568 (NQ) each bind S-adenosyl-L-methionine.

This sequence belongs to the MT-A70-like family. Component of the WMM complex, a N6-methyltransferase complex composed of a catalytic subcomplex, named MAC, and of an associated subcomplex, named MACOM. The MAC subcomplex is composed of Ime4/Mettl3 and Mettl14. The MACOM subcomplex is composed of fl(2)d, Flacc/Xio, Hakai, vir, and, in some cases of nito. As to expression, expressed in testes. In the ovaries, detected in germaria, prefollicle, follicle and polar cells (at protein levels). Detected in the ooplasm and in the cells of the 16-cell cyst of early stages (at protein levels).

It localises to the nucleus. It catalyses the reaction an adenosine in mRNA + S-adenosyl-L-methionine = an N(6)-methyladenosine in mRNA + S-adenosyl-L-homocysteine + H(+). Its function is as follows. Catalytic component of the WMM complex, a complex that mediates N6-methyladenosine (m6A) methylation of mRNAs, a modification that plays a role in the efficiency of mRNA splicing and is required for sex determination. In the heterodimer formed with Mettl14, constitutes the catalytic core. Required for sex determination and dosage compensation via Sxl alternative splicing: m6A methylation acts as a key regulator of Sxl pre-mRNA and promotes female-specific alternative splicing of Sxl, which determines female physiognomy. M6A methylation is also required for neuronal functions. During oogenesis, required for egg chamber development probably as part of the N/Notch signaling. The protein is N(6)-adenosine-methyltransferase MT-A70-like protein of Drosophila melanogaster (Fruit fly).